The primary structure comprises 82 residues: UPF0729 protein C18orf32 homolog (82 aa).

The segment at 1–37 is necessary for its localzation to the endoplasmic reticulum and lipid droplets; it reads MVCIPCIVIPVLLWVYKKFLEPIVYPFISPIINRIWP. A disordered region spans residues 46 to 82; the sequence is TSAKKEESNGTCKASGTSITNGSVSRGEEAVPDKKTD. Polar residues predominate over residues 54-69; it reads NGTCKASGTSITNGSV. Over residues 71–82 the composition is skewed to basic and acidic residues; that stretch reads RGEEAVPDKKTD.

Belongs to the UPF0729 family.

It localises to the endoplasmic reticulum. It is found in the lipid droplet. The polypeptide is UPF0729 protein C18orf32 homolog (Xenopus tropicalis (Western clawed frog)).